A 366-amino-acid polypeptide reads, in one-letter code: Patr class I histocompatibility antigen, C alpha chain (366 aa).

The N-terminal stretch at 1 to 24 (MRVTAPRTLLLLLSGGLALTETWA) is a signal peptide. Residues 25–114 (GSHSLRYFDT…LRGYYNQSED (90 aa)) form an alpha-1 region. Over 25–308 (GSHSLRYFDT…KPTSQPTIPI (284 aa)) the chain is Extracellular. N-linked (GlcNAc...) asparagine glycosylation occurs at Asn-110. Positions 115 to 206 (GSHTLQWMYG…ENGKETLQRT (92 aa)) are alpha-2. 2 disulfide bridges follow: Cys-125–Cys-192 and Cys-227–Cys-283. Residues 207 to 298 (ECPKTHMTHH…GLPEPLTLRW (92 aa)) are alpha-3. The region spanning 209-297 (PKTHMTHHPV…EGLPEPLTLR (89 aa)) is the Ig-like C1-type domain. The connecting peptide stretch occupies residues 299-308 (KPTSQPTIPI). The helical transmembrane segment at 309–332 (VGIVAGLAVLAVLAVLGAVVTAMM) threads the bilayer. Residues 333–366 (CRRKSSGGKGGSCSQAACSNSAQGSDESLIACKA) lie on the Cytoplasmic side of the membrane. 2 positions are modified to phosphoserine: Ser-357 and Ser-360.

Belongs to the MHC class I family. As to quaternary structure, heterodimer of an alpha chain and a beta chain (beta-2-microglobulin).

It localises to the membrane. Functionally, involved in the presentation of foreign antigens to the immune system. In Pan troglodytes (Chimpanzee), this protein is Patr class I histocompatibility antigen, C alpha chain.